Consider the following 100-residue polypeptide: Carboxysome shell vertex protein CcmL (100 aa).

A BMV domain is found at 1-83 (MQIGRVRGTV…VDAVVIGIID (83 aa)).

The protein belongs to the CcmL/EutN family. CcmL subfamily. Homopentamer. Interacts with full-length CcmM.

The protein localises to the carboxysome. Functionally, probably forms vertices in the carboxysome, a polyhedral inclusion where RuBisCO (ribulose bisphosphate carboxylase, rbcL-rbcS) is sequestered. Has been modeled to induce curvature upon insertion into an otherwise flat hexagonal molecular layer of CcmK subunits. This chain is Carboxysome shell vertex protein CcmL, found in Gloeobacter violaceus (strain ATCC 29082 / PCC 7421).